Consider the following 585-residue polypeptide: Arginine--tRNA ligase (585 aa).

The 'HIGH' region motif lies at 131–141 (ANPTGPMHVGH).

Belongs to the class-I aminoacyl-tRNA synthetase family. Monomer.

It is found in the cytoplasm. It carries out the reaction tRNA(Arg) + L-arginine + ATP = L-arginyl-tRNA(Arg) + AMP + diphosphate. In Rhizobium meliloti (strain 1021) (Ensifer meliloti), this protein is Arginine--tRNA ligase.